We begin with the raw amino-acid sequence, 367 residues long: E3 ubiquitin-protein ligase RGLG3 (367 aa).

The VWFA domain occupies 37-257; it reads NLILGIDFTK…KEAAFALAAL (221 aa). Residues 323–356 form an RING-type zinc finger; sequence CPICLTNPKDMAFSCGHTTCKECGVVITTCPLCR.

As to quaternary structure, interacts with UBC30, GRXS17 and GLB3. Binds to and coactivates GAF1/IDD2 and ENY/IDD1. As to expression, widely expressed.

The protein localises to the cytoplasm. Its subcellular location is the nucleus. It carries out the reaction S-ubiquitinyl-[E2 ubiquitin-conjugating enzyme]-L-cysteine + [acceptor protein]-L-lysine = [E2 ubiquitin-conjugating enzyme]-L-cysteine + N(6)-ubiquitinyl-[acceptor protein]-L-lysine.. In terms of biological role, possesses E3 ubiquitin-protein ligase in vitro. Acts as upstream modulator of jasmonate (JA) signaling in response to various stimuli, such as JA-inhibited root growth, JA-inductive gene expression, coronatine-mediated pathogen susceptibility, wound-stimulated expression of JA-responsive genes and wound-induced JA biosynthesis. Controls fumonisin B1 (FB1)-triggered programmed cell death (PCD) by modulating the JA signaling pathway. May mediate salicylic acid (SA) suppression of JA signaling in FB1-induced responses. May mediate the formation of 'Lys-48'-linked multiubiquitin chains. Mediates the polyubiquitination and subsequent proteasomal degradation of the target protein GRXS17. This is E3 ubiquitin-protein ligase RGLG3 from Arabidopsis thaliana (Mouse-ear cress).